The chain runs to 309 residues: MSSYPPHEVAQRLASGLLSFPVTHFRADLTFDEPAYREHIGWLGQFGAAGLFAAGGTGEFFSLTPAEVETVVSAAVREVPDGLPVIAPAGYGTAMAVELARAAERAGAHGILLLPPYLTEADQEGLAAHVRAVCAATGLGVILYSRANAVYTETTVARLAEDCPNLVGFKDGVGDIERMTRLYARLGDRLTYVGGLPTAETFALPYLELGVTTYSSAMFNFVPRFALDFYDAVRRRDHAEVRRRLNDFVLPYCDIRNRRAGYAVSIVKAGMKVIGRPAGPVRSPLTDLDDAELAMLADLVKSMPATGEA.

This sequence belongs to the DapA family.

It catalyses the reaction 5-dehydro-4-deoxy-D-glucarate + H(+) = 2,5-dioxopentanoate + CO2 + H2O. It participates in carbohydrate acid metabolism; D-glucarate degradation; 2,5-dioxopentanoate from D-glucarate: step 2/2. The polypeptide is Probable 5-dehydro-4-deoxyglucarate dehydratase (Saccharopolyspora erythraea (strain ATCC 11635 / DSM 40517 / JCM 4748 / NBRC 13426 / NCIMB 8594 / NRRL 2338)).